Consider the following 190-residue polypeptide: UPF0200 protein TGAM_0868 (190 aa).

ATP is bound at residue 7–14; it reads GMPGSGKS.

This sequence belongs to the UPF0200 family.

The sequence is that of UPF0200 protein TGAM_0868 from Thermococcus gammatolerans (strain DSM 15229 / JCM 11827 / EJ3).